The chain runs to 348 residues: Erythronate-4-phosphate dehydrogenase (348 aa).

Positions 46 and 67 each coordinate substrate. NAD(+) is bound at residue Asp147. Arg209 is a catalytic residue. An NAD(+)-binding site is contributed by Asp233. The active site involves Glu238. His255 serves as the catalytic Proton donor. Gly258 provides a ligand contact to NAD(+). Tyr259 is a binding site for substrate.

Belongs to the D-isomer specific 2-hydroxyacid dehydrogenase family. PdxB subfamily. As to quaternary structure, homodimer.

Its subcellular location is the cytoplasm. The catalysed reaction is 4-phospho-D-erythronate + NAD(+) = (R)-3-hydroxy-2-oxo-4-phosphooxybutanoate + NADH + H(+). Its pathway is cofactor biosynthesis; pyridoxine 5'-phosphate biosynthesis; pyridoxine 5'-phosphate from D-erythrose 4-phosphate: step 2/5. Functionally, catalyzes the oxidation of erythronate-4-phosphate to 3-hydroxy-2-oxo-4-phosphonooxybutanoate. This is Erythronate-4-phosphate dehydrogenase from Bacteroides fragilis (strain ATCC 25285 / DSM 2151 / CCUG 4856 / JCM 11019 / LMG 10263 / NCTC 9343 / Onslow / VPI 2553 / EN-2).